The following is a 271-amino-acid chain: Aquaporin-11 (271 aa).

Over 1-14 (MSALLGLRPEVQDT) the chain is Cytoplasmic. Residues 15–35 (CISLGLMLLFVLFVGLARVIA) traverse the membrane as a helical segment. Over 36-41 (RQQLHR) the chain is Lumenal. A helical membrane pass occupies residues 42–62 (PVVHAFVLEFLATFQLCCCTH). The Cytoplasmic portion of the chain corresponds to 63 to 76 (ELQVLSEQDSAHPT). Residues 77 to 97 (WTLTLIYFFSLVHGLTLVGTA) traverse the membrane as a helical segment. Over 98–166 (SNPCGVMMQM…NPIHTDMSKA (69 aa)) the chain is Lumenal. The short motif at 99 to 101 (NPC) is the NPC element. A helical membrane pass occupies residues 167 to 187 (IIIEAICSFIFHSALLHFQEV). Topologically, residues 188–194 (RTKLRIH) are cytoplasmic. The helical transmembrane segment at 195–215 (LLAALITFLAYAGGSLTGALF) threads the bilayer. The NPA signature appears at 216-218 (NPA). At 216-234 (NPALALSLHFPCFDELFYK) the chain is on the lumenal side. Residues 235–255 (FFVVYWLAPSVGVLMMILMFS) form a helical membrane-spanning segment. Residues 256-271 (FFLPWLHNNQMTNKKE) are Cytoplasmic-facing.

It belongs to the MIP/aquaporin (TC 1.A.8) family. AQP11/AQP12 subfamily. As to quaternary structure, homodimer; disulfide-linked. Homotetramer. Can also form homomultimer. In terms of processing, not glycosylated. In terms of tissue distribution, highly expressed in the S1 proximal tubule segment,. Expressed in the testis, kidney, and liver. Weakly expressed in the heart, brain, and muscle. Highly expressed in the testis. Expressed in the proximal tubule of the cortex of 8-day-old mouse kidney. Expressed in retina specifically at retinal Mueller glial cells. Expressed in brain. Expressed abundantly at the choroid plexus but also expressed weakly in the parenchyma. Expressed at the capillary endothelium in the cerebral white matter. Expressed in adult testis, in the elongated spermatids (ES) and in residual bodies inside Sertoli cells.

It is found in the endoplasmic reticulum membrane. The protein resides in the cytoplasmic vesicle membrane. Its subcellular location is the cell membrane. It catalyses the reaction H2O(in) = H2O(out). The enzyme catalyses glycerol(in) = glycerol(out). It carries out the reaction H2O2(out) = H2O2(in). Channel protein that facilitates the transport of water, glycerol and hydrogen peroxide across membrane of cell or organelles guaranteeing intracellular homeostasis in several organes like liver, kidney and brain. In situation of stress, participates in endoplasmic reticulum (ER) homeostasis by regulating redox homeostasis through the transport of hydrogen peroxide across the endoplasmic reticulum membrane thereby regulating the oxidative stress through the NADPH oxidase 2 pathway. Plays a role by maintaining an environment suitable for translation or protein foldings in the ER lumen namely by participating in the PKD1 glycosylation processing resulting in regulation of PKD1 membrane trafficking thereby preventing the accumulation of unfolding protein in ER. Plays a role in the proximal tubule function by regulating its endosomal acidification. May play a role in postnatal kidney development. This is Aquaporin-11 from Mus musculus (Mouse).